A 608-amino-acid chain; its full sequence is Afamin (608 aa).

The signal sequence occupies residues 1-21 (MRHLKLTGFIFFLLSLTESLA). 3 consecutive Albumin domains span residues 22–210 (LPTK…APIT), 211–403 (QYLK…KFNE), and 404–599 (TTER…KTGD). The N-linked (GlcNAc...) asparagine glycan is linked to Asn-33. 10 disulfides stabilise this stretch: Cys-77-Cys-86, Cys-99-Cys-114, Cys-113-Cys-124, Cys-148-Cys-193, Cys-224-Cys-270, Cys-269-Cys-277, Cys-289-Cys-303, Cys-302-Cys-313, Cys-340-Cys-385, and Cys-384-Cys-393. Residue Asn-109 is glycosylated (N-linked (GlcNAc...) asparagine). N-linked (GlcNAc...) asparagine glycosylation occurs at Asn-153. The segment at 215 to 319 (ALSSYQRNVC…RADCIINANK (105 aa)) is binding pocket for hydrophobic ligands. A glycan (N-linked (GlcNAc...) asparagine) is linked at Asn-402. 5 disulfide bridges follow: Cys-416/Cys-462, Cys-461/Cys-470, Cys-483/Cys-499, Cys-498/Cys-509, and Cys-580/Cys-589. Asn-488 is a glycosylation site (N-linked (GlcNAc...) asparagine). Positions 585-608 (KPEACFSPESSKTGDVSQDAEKQR) are disordered.

This sequence belongs to the ALB/AFP/VDB family. In terms of assembly, forms a 1:1 complex with Wnt family members; interacts with WNT1, WNT2B, WNT3, WNT3A, WNT5A, WNT7A, WNT7B, WNT8, WNT9A, WNT9B, WNT10A and WNT10B. N-glycosylated; more than 90% of the glycans are sialylated.

The protein localises to the secreted. Functions as a carrier for hydrophobic molecules in body fluids. Essential for the solubility and activity of lipidated Wnt family members, including WNT1, WNT2B, WNT3, WNT3A, WNT5A, WNT7A, WNT7B, WNT8, WNT9A, WNT9B, WNT10A and WNT10B. Binds vitamin E. May transport vitamin E in body fluids under conditions where the lipoprotein system is not sufficient. May be involved in the transport of vitamin E across the blood-brain barrier. This is Afamin (Afm) from Rattus norvegicus (Rat).